Reading from the N-terminus, the 571-residue chain is Ferroportin (571 aa).

The Cytoplasmic portion of the chain corresponds to 1 to 23 (MTRAGDHNRQRGCCGSLADYLTS). Residues 24–53 (AKFLLYLGHSLSTWGDRMWHFAVSVFLVEL) traverse the membrane as a helical segment. Asp-39 and His-43 together coordinate Fe cation. Residues 54–57 (YGNS) are Extracellular-facing. A helical transmembrane segment spans residues 58-84 (LLLTAVYGLVVAGSVLVLGAIIGDWVD). Residues 85-87 (KNA) are Cytoplasmic-facing. The chain crosses the membrane as a helical span at residues 88–118 (RLKVAQTSLVVQNVSVILCGIILMMVFLHKH). Over 119–126 (ELLTMYHG) the chain is Extracellular. A helical transmembrane segment spans residues 127-162 (WVLTSCYILIITIANIANLASTATAITIQRDWIVVV). The Cytoplasmic portion of the chain corresponds to 163 to 164 (AG). Residues 165 to 195 (EDRSKLANMNATIRRIDQLTNILAPMAVGQI) traverse the membrane as a helical segment. Residues 196–202 (MTFGSPV) lie on the Extracellular side of the membrane. Residues 203–229 (IGCGFISGWNLVSMCVEYVLLWKVYQK) traverse the membrane as a helical segment. Residues 230–306 (TPALAVKAGL…DGWVSYYNQP (77 aa)) are Cytoplasmic-facing. A helical membrane pass occupies residues 307–333 (VFLAGMGLAFLYMTVLGFDCITTGYAY). Cys-326 provides a ligand contact to Fe cation. The Extracellular portion of the chain corresponds to 334-338 (TQGLS). A helical membrane pass occupies residues 339–366 (GSILSILMGASAITGIMGTVAFTWLRRK). At 367 to 368 (CG) the chain is on the cytoplasmic side. Residues 369 to 391 (LVRTGLISGLAQLSCLILCVISV) form a helical membrane-spanning segment. Topologically, residues 392-453 (FMPGSPLDLS…ETSPESVPII (62 aa)) are extracellular. An N-linked (GlcNAc...) asparagine glycan is attached at Asn-434. The helical transmembrane segment at 454–483 (SVSLLFAGVIAARIGLWSFDLTVTQLLQEN) threads the bilayer. Residues 484-488 (VIESE) lie on the Cytoplasmic side of the membrane. Residues 489–513 (RGIINGVQNSMNYLLDLLHFIMVIL) traverse the membrane as a helical segment. His-507 contacts Fe cation. Topologically, residues 514-516 (APN) are extracellular. A helical membrane pass occupies residues 517 to 542 (PEAFGLLVLISVSFVAMGHIMYFRFA). The Cytoplasmic portion of the chain corresponds to 543–571 (QNTLGNKLFACGPDAKEVRKENQANTSVV).

Belongs to the ferroportin (FP) (TC 2.A.100) family. SLC40A subfamily. In terms of assembly, identified in a complex with STOM. Interacts with HAMP; affinity of the peptide hormone HAMP for SLC40A1 increases by 80-fold in the presence of iron and the interaction promotes SLC40A1 ubiquitination and degradation. Part of a complex composed of SLC40A1/ferroportin, TF/transferrin and HEPH/hephaestin that transfers iron from cells to transferrin. Polyubiquitinated by RNF217; leading to proteasomal degradation. Under conditions of high systemic iron levels, both the hormone peptide hepcidin/HAMP and holo(iron bound)-transferrin/TF induce the ubiquitination, internalization and proteasomal degradation of SLC40A1 to control iron release from cells. As to expression, detected in erythrocytes (at protein level). Expressed in placenta, intestine, muscle and spleen. Highly expressed in mature red blood.

It is found in the cell membrane. The protein localises to the basolateral cell membrane. The catalysed reaction is Fe(2+)(in) = Fe(2+)(out). In terms of biological role, transports Fe(2+) from the inside of a cell to the outside of the cell, playing a key role for maintaining systemic iron homeostasis. Transports iron from intestinal, splenic, hepatic cells, macrophages and erythrocytes into the blood to provide iron to other tissues. Controls therefore dietary iron uptake, iron recycling by macrophages and erythrocytes, and release of iron stores in hepatocytes. When iron is in excess in serum, circulating HAMP/hepcidin levels increase resulting in a degradation of SLC40A1, thus limiting the iron efflux to plasma. The polypeptide is Ferroportin (Homo sapiens (Human)).